Here is a 463-residue protein sequence, read N- to C-terminus: NADH dehydrogenase [ubiquinone] iron-sulfur protein 2, mitochondrial (463 aa).

A mitochondrion-targeting transit peptide spans 1–33 (MAALRALCGFRGVAAQVLRPGAGVRLPIQPSRG). Lys62 bears the N6-acetyllysine mark. Arg118 is subject to Symmetric dimethylarginine. Positions 326, 332, and 347 each coordinate [4Fe-4S] cluster.

It belongs to the complex I 49 kDa subunit family. In terms of assembly, core subunit of respiratory chain NADH dehydrogenase (Complex I) which is composed of 45 different subunits. Component of the iron-sulfur (IP) fragment of the enzyme. Interacts with NDUFAF3. Interacts with NDUFAF7. Interacts with CERS2. [4Fe-4S] cluster serves as cofactor. In terms of processing, dimethylation at Arg-118 by NDUFAF7 takes place after NDUFS2 assembles into the complex I, leading to stabilize the early intermediate complex.

It is found in the mitochondrion inner membrane. It carries out the reaction a ubiquinone + NADH + 5 H(+)(in) = a ubiquinol + NAD(+) + 4 H(+)(out). Its function is as follows. Core subunit of the mitochondrial membrane respiratory chain NADH dehydrogenase (Complex I) which catalyzes electron transfer from NADH through the respiratory chain, using ubiquinone as an electron acceptor. Essential for the catalytic activity of complex I. Essential for the assembly of complex I. Redox-sensitive, critical component of the oxygen-sensing pathway in the pulmonary vasculature which plays a key role in acute pulmonary oxygen-sensing and hypoxic pulmonary vasoconstriction. Plays an important role in carotid body sensing of hypoxia. Essential for glia-like neural stem and progenitor cell proliferation, differentiation and subsequent oligodendrocyte or neuronal maturation. In Homo sapiens (Human), this protein is NADH dehydrogenase [ubiquinone] iron-sulfur protein 2, mitochondrial (NDUFS2).